The sequence spans 131 residues: Small ribosomal subunit protein bS6 (131 aa).

Residues D94–D131 are disordered. A compositionally biased stretch (basic and acidic residues) spans R117–D131.

This sequence belongs to the bacterial ribosomal protein bS6 family.

Its function is as follows. Binds together with bS18 to 16S ribosomal RNA. The chain is Small ribosomal subunit protein bS6 from Psychrobacter cryohalolentis (strain ATCC BAA-1226 / DSM 17306 / VKM B-2378 / K5).